Reading from the N-terminus, the 319-residue chain is MKTETPSVKIVAITADEAGQRIDNFLRTQLKGVPKSMIYRILRKGEVRVNKKRIKPEYKLEAGDEVRIPPVRVAEREEEAVSPHLQKVAALADVILYEDDHILVLNKPSGTAVHGGSGLSFGVIEGLRALRPEARFLELVHRLDRDTSGVLLVAKKRSALRSLHEQLREKGMQKDYLALVRGQWQSYVKSVQAPLLKNILQSGERIVRVSQEGKPSETRFKVEERYAFATLVRCSPVTGRTHQIRVHTQYAGHPIAFDDRYGDREFDRQLTEAGTGLNRLFLHAAALKFTHPGTGEVMRIEAPMDEGLKRCLQKLRNAR.

The 64-residue stretch at 20 to 83 (QRIDNFLRTQ…AEREEEAVSP (64 aa)) folds into the S4 RNA-binding domain. Asp144 is an active-site residue.

Belongs to the pseudouridine synthase RluA family.

It catalyses the reaction uridine(955/2504/2580) in 23S rRNA = pseudouridine(955/2504/2580) in 23S rRNA. Its function is as follows. Responsible for synthesis of pseudouridine from uracil at positions 955, 2504 and 2580 in 23S ribosomal RNA. This Escherichia coli O6:H1 (strain CFT073 / ATCC 700928 / UPEC) protein is Ribosomal large subunit pseudouridine synthase C (rluC).